The primary structure comprises 281 residues: Small ribosomal subunit protein uS3 (281 aa).

In terms of domain architecture, KH type-2 spans 38 to 106 (IRRLLSTGLE…QVQLNILEVK (69 aa)). Residues 218 to 281 (APAGAERARR…VTHEPQIAES (64 aa)) form a disordered region. The segment covering 238–252 (SGAAGTTVTGTDAGR) has biased composition (low complexity).

The protein belongs to the universal ribosomal protein uS3 family. As to quaternary structure, part of the 30S ribosomal subunit. Forms a tight complex with proteins S10 and S14.

In terms of biological role, binds the lower part of the 30S subunit head. Binds mRNA in the 70S ribosome, positioning it for translation. This is Small ribosomal subunit protein uS3 from Mycobacterium leprae (strain TN).